A 288-amino-acid polypeptide reads, in one-letter code: 4-diphosphocytidyl-2-C-methyl-D-erythritol kinase (288 aa).

The active site involves lysine 19. Residue 102–112 participates in ATP binding; the sequence is PMGGGIGGGSS. Residue aspartate 144 is part of the active site.

This sequence belongs to the GHMP kinase family. IspE subfamily.

It catalyses the reaction 4-CDP-2-C-methyl-D-erythritol + ATP = 4-CDP-2-C-methyl-D-erythritol 2-phosphate + ADP + H(+). The protein operates within isoprenoid biosynthesis; isopentenyl diphosphate biosynthesis via DXP pathway; isopentenyl diphosphate from 1-deoxy-D-xylulose 5-phosphate: step 3/6. Catalyzes the phosphorylation of the position 2 hydroxy group of 4-diphosphocytidyl-2C-methyl-D-erythritol. This chain is 4-diphosphocytidyl-2-C-methyl-D-erythritol kinase, found in Pseudomonas savastanoi pv. phaseolicola (strain 1448A / Race 6) (Pseudomonas syringae pv. phaseolicola (strain 1448A / Race 6)).